The primary structure comprises 424 residues: Enolase (424 aa).

Q165 provides a ligand contact to (2R)-2-phosphoglycerate. E207 acts as the Proton donor in catalysis. Positions 244, 283, and 310 each coordinate Mg(2+). Residues K335, R364, S365, and K386 each contribute to the (2R)-2-phosphoglycerate site. The active-site Proton acceptor is the K335.

Belongs to the enolase family. The cofactor is Mg(2+).

It localises to the cytoplasm. It is found in the secreted. The protein localises to the cell surface. It carries out the reaction (2R)-2-phosphoglycerate = phosphoenolpyruvate + H2O. It participates in carbohydrate degradation; glycolysis; pyruvate from D-glyceraldehyde 3-phosphate: step 4/5. Catalyzes the reversible conversion of 2-phosphoglycerate (2-PG) into phosphoenolpyruvate (PEP). It is essential for the degradation of carbohydrates via glycolysis. This is Enolase from Chlamydia trachomatis serovar D (strain ATCC VR-885 / DSM 19411 / UW-3/Cx).